The sequence spans 245 residues: tRNA pseudouridine synthase A (245 aa).

Asp52 serves as the catalytic Nucleophile. Tyr110 serves as a coordination point for substrate.

It belongs to the tRNA pseudouridine synthase TruA family. Homodimer.

It carries out the reaction uridine(38/39/40) in tRNA = pseudouridine(38/39/40) in tRNA. Functionally, formation of pseudouridine at positions 38, 39 and 40 in the anticodon stem and loop of transfer RNAs. This chain is tRNA pseudouridine synthase A, found in Pseudothermotoga lettingae (strain ATCC BAA-301 / DSM 14385 / NBRC 107922 / TMO) (Thermotoga lettingae).